Reading from the N-terminus, the 313-residue chain is MAALQHLTGLCGMSAGTLSGLLDKTEGFKKELTAPAPSFSPSLQGRRIALVFFENSTRTRFSFELAARNLGASTLGFSASTSSVTKGETLSDTIKNLEAMQVDAFVLRHPSSGSAEFISGITKKPVVNAGDGANEHPTQALLDMFTLREHFGTLKAIKVAIIGDVLHSRVARSNIHGLLTMGAEVGLCSPVTLLPPDSEKLGVSLFTDLDQALGWADAALVLRLQLERATGGYLPSLQEYSVHYGLTDERLERTARHLLVLHPGPINREIEISNRVADRIQPPGYSKSMLLEQVTNGVAVRMAVLQTLLADTP.

Arg58 and Thr59 together coordinate carbamoyl phosphate. Lys86 provides a ligand contact to L-aspartate. 3 residues coordinate carbamoyl phosphate: Arg108, His136, and Gln139. Positions 169 and 223 each coordinate L-aspartate. Gly264 and Pro265 together coordinate carbamoyl phosphate.

The protein belongs to the aspartate/ornithine carbamoyltransferase superfamily. ATCase family. Heterododecamer (2C3:3R2) of six catalytic PyrB chains organized as two trimers (C3), and six regulatory PyrI chains organized as three dimers (R2).

It catalyses the reaction carbamoyl phosphate + L-aspartate = N-carbamoyl-L-aspartate + phosphate + H(+). It participates in pyrimidine metabolism; UMP biosynthesis via de novo pathway; (S)-dihydroorotate from bicarbonate: step 2/3. Catalyzes the condensation of carbamoyl phosphate and aspartate to form carbamoyl aspartate and inorganic phosphate, the committed step in the de novo pyrimidine nucleotide biosynthesis pathway. This is Aspartate carbamoyltransferase catalytic subunit from Chlorobium luteolum (strain DSM 273 / BCRC 81028 / 2530) (Pelodictyon luteolum).